The chain runs to 335 residues: Dihydroorotate dehydrogenase (quinone) (335 aa).

FMN contacts are provided by residues 59–63 (AGLDK) and T83. K63 contacts substrate. Position 108–112 (108–112 (NRMGF)) interacts with substrate. FMN is bound by residues N136 and N169. N169 contacts substrate. The active-site Nucleophile is the S172. N174 lines the substrate pocket. 2 residues coordinate FMN: K214 and T242. Substrate is bound at residue 243–244 (NT). Residues G265, G294, and 315–316 (YS) contribute to the FMN site.

This sequence belongs to the dihydroorotate dehydrogenase family. Type 2 subfamily. In terms of assembly, monomer. FMN is required as a cofactor.

Its subcellular location is the cell membrane. It carries out the reaction (S)-dihydroorotate + a quinone = orotate + a quinol. It participates in pyrimidine metabolism; UMP biosynthesis via de novo pathway; orotate from (S)-dihydroorotate (quinone route): step 1/1. Functionally, catalyzes the conversion of dihydroorotate to orotate with quinone as electron acceptor. This Neisseria meningitidis serogroup B (strain ATCC BAA-335 / MC58) protein is Dihydroorotate dehydrogenase (quinone).